The primary structure comprises 413 residues: Imidazolonepropionase (413 aa).

Residues His-70 and His-72 each coordinate Fe(3+). Residues His-70 and His-72 each coordinate Zn(2+). The 4-imidazolone-5-propanoate site is built by Arg-79, Tyr-142, and His-175. Residue Tyr-142 coordinates N-formimidoyl-L-glutamate. His-240 contacts Fe(3+). His-240 is a Zn(2+) binding site. Position 243 (Glu-243) interacts with 4-imidazolone-5-propanoate. Fe(3+) is bound at residue Asp-315. A Zn(2+)-binding site is contributed by Asp-315. 2 residues coordinate N-formimidoyl-L-glutamate: Asn-317 and Gly-319. Residue Ser-320 coordinates 4-imidazolone-5-propanoate.

The protein belongs to the metallo-dependent hydrolases superfamily. HutI family. It depends on Zn(2+) as a cofactor. Requires Fe(3+) as cofactor.

Its subcellular location is the cytoplasm. The catalysed reaction is 4-imidazolone-5-propanoate + H2O = N-formimidoyl-L-glutamate. It functions in the pathway amino-acid degradation; L-histidine degradation into L-glutamate; N-formimidoyl-L-glutamate from L-histidine: step 3/3. Functionally, catalyzes the hydrolytic cleavage of the carbon-nitrogen bond in imidazolone-5-propanoate to yield N-formimidoyl-L-glutamate. It is the third step in the universal histidine degradation pathway. This chain is Imidazolonepropionase, found in Treponema denticola (strain ATCC 35405 / DSM 14222 / CIP 103919 / JCM 8153 / KCTC 15104).